A 454-amino-acid polypeptide reads, in one-letter code: COBRA-like protein 6 (454 aa).

A signal peptide spans 1 to 24 (MGAMLNLLLVVTVILCSILSPTRF). N104, N191, N320, N355, and N391 each carry an N-linked (GlcNAc...) asparagine glycan. Residue S429 is the site of GPI-anchor amidated serine attachment. A propeptide spans 430–454 (SSSSAVISSVSVVFCFLLHHLLLLV) (removed in mature form).

This sequence belongs to the COBRA family. In terms of tissue distribution, expressed in flowers and siliques.

It localises to the cell membrane. The sequence is that of COBRA-like protein 6 (COBL6) from Arabidopsis thaliana (Mouse-ear cress).